We begin with the raw amino-acid sequence, 211 residues long: Octanoyltransferase (211 aa).

One can recognise a BPL/LPL catalytic domain in the interval 28–203 (GSAPETLLLV…HFQSLLKTWL (176 aa)). Residues 66-73 (RGGDITYH), 133-135 (SIG), and 146-148 (GFA) each bind substrate. The Acyl-thioester intermediate role is filled by C164.

This sequence belongs to the LipB family.

The protein localises to the cytoplasm. The catalysed reaction is octanoyl-[ACP] + L-lysyl-[protein] = N(6)-octanoyl-L-lysyl-[protein] + holo-[ACP] + H(+). The protein operates within protein modification; protein lipoylation via endogenous pathway; protein N(6)-(lipoyl)lysine from octanoyl-[acyl-carrier-protein]: step 1/2. Its function is as follows. Catalyzes the transfer of endogenously produced octanoic acid from octanoyl-acyl-carrier-protein onto the lipoyl domains of lipoate-dependent enzymes. Lipoyl-ACP can also act as a substrate although octanoyl-ACP is likely to be the physiological substrate. This Syntrophotalea carbinolica (strain DSM 2380 / NBRC 103641 / GraBd1) (Pelobacter carbinolicus) protein is Octanoyltransferase.